A 173-amino-acid polypeptide reads, in one-letter code: Crossover junction endodeoxyribonuclease RuvC (173 aa).

Catalysis depends on residues Asp8, Glu67, and Asp139. Residues Asp8, Glu67, and Asp139 each coordinate Mg(2+).

This sequence belongs to the RuvC family. In terms of assembly, homodimer which binds Holliday junction (HJ) DNA. The HJ becomes 2-fold symmetrical on binding to RuvC with unstacked arms; it has a different conformation from HJ DNA in complex with RuvA. In the full resolvosome a probable DNA-RuvA(4)-RuvB(12)-RuvC(2) complex forms which resolves the HJ. It depends on Mg(2+) as a cofactor.

The protein localises to the cytoplasm. The enzyme catalyses Endonucleolytic cleavage at a junction such as a reciprocal single-stranded crossover between two homologous DNA duplexes (Holliday junction).. In terms of biological role, the RuvA-RuvB-RuvC complex processes Holliday junction (HJ) DNA during genetic recombination and DNA repair. Endonuclease that resolves HJ intermediates. Cleaves cruciform DNA by making single-stranded nicks across the HJ at symmetrical positions within the homologous arms, yielding a 5'-phosphate and a 3'-hydroxyl group; requires a central core of homology in the junction. The consensus cleavage sequence is 5'-(A/T)TT(C/G)-3'. Cleavage occurs on the 3'-side of the TT dinucleotide at the point of strand exchange. HJ branch migration catalyzed by RuvA-RuvB allows RuvC to scan DNA until it finds its consensus sequence, where it cleaves and resolves the cruciform DNA. In Yersinia pseudotuberculosis serotype O:1b (strain IP 31758), this protein is Crossover junction endodeoxyribonuclease RuvC.